We begin with the raw amino-acid sequence, 684 residues long: Glycine--tRNA ligase beta subunit (684 aa).

Belongs to the class-II aminoacyl-tRNA synthetase family. In terms of assembly, tetramer of two alpha and two beta subunits.

It localises to the cytoplasm. It catalyses the reaction tRNA(Gly) + glycine + ATP = glycyl-tRNA(Gly) + AMP + diphosphate. The chain is Glycine--tRNA ligase beta subunit from Pseudomonas putida (strain ATCC 47054 / DSM 6125 / CFBP 8728 / NCIMB 11950 / KT2440).